Reading from the N-terminus, the 271-residue chain is Acyl-[acyl-carrier-protein]--UDP-N-acetylglucosamine O-acyltransferase (271 aa).

It belongs to the transferase hexapeptide repeat family. LpxA subfamily. In terms of assembly, homotrimer.

Its subcellular location is the cytoplasm. The catalysed reaction is a (3R)-hydroxyacyl-[ACP] + UDP-N-acetyl-alpha-D-glucosamine = a UDP-3-O-[(3R)-3-hydroxyacyl]-N-acetyl-alpha-D-glucosamine + holo-[ACP]. The protein operates within glycolipid biosynthesis; lipid IV(A) biosynthesis; lipid IV(A) from (3R)-3-hydroxytetradecanoyl-[acyl-carrier-protein] and UDP-N-acetyl-alpha-D-glucosamine: step 1/6. In terms of biological role, involved in the biosynthesis of lipid A, a phosphorylated glycolipid that anchors the lipopolysaccharide to the outer membrane of the cell. The chain is Acyl-[acyl-carrier-protein]--UDP-N-acetylglucosamine O-acyltransferase from Sulfurihydrogenibium sp. (strain YO3AOP1).